The primary structure comprises 2227 residues: Genome polyprotein (2227 aa).

2 consecutive short sequence motifs ((L)YPX(n)L motif) follow at residues 167–171 and 200–205; these read YPHGL and YPVWEL. Residues 766–836 form an involved in P1-2A pentamerization region; it reads MMSRIAAGDL…PRKKKGLFSQ (71 aa). Residues 1010 to 1030 form a helical membrane-spanning segment; sequence VTVEIINTVLCFVKSGILLYV. Positions 1043 to 1070 are membrane-penetrating ability; sequence IGLLRVMNYVDIGCSVISCGKVFSKMLE. A coiled-coil region spans residues 1127–1152; sequence KKKDILNILKDNQQKIEKAIEEADKF. Positions 1204–1366 constitute an SF3 helicase domain; the sequence is HQKLKNLGSI…SFSKNPHNDM (163 aa). 1230–1237 contacts ATP; that stretch reads GKRGGGKS. A helical transmembrane segment spans residues 1462–1482; sequence WVAVGAAVGILGVLVGGWFVY. Residue Tyr1499 is modified to O-(5'-phospho-RNA)-tyrosine. The region spanning 1514–1728 is the Peptidase C3 domain; that stretch reads DPVESQSTLE…VAKLVTQEMF (215 aa). Catalysis depends on for protease 3C activity residues His1563, Asp1603, and Cys1691. The 122-residue stretch at 1976-2097 folds into the RdRp catalytic domain; sequence DVGLDLDFSA…VFSRDVQIDN (122 aa).

This sequence belongs to the picornaviridae polyprotein family. Homodimer. Homomultimer; probably interacts with membranes in a multimeric form. Seems to assemble into amyloid-like fibers. In terms of assembly, homodimer. Monomer. Interacts with protein 3CD. As to quaternary structure, interacts with host ACBD3. Interacts with protein 3AB. In terms of assembly, interacts with human MAVS. As to quaternary structure, homodimer; disulfide-linked. Homopentamer. Homooligomer. In terms of assembly, interacts with capsid protein VP2. Interacts with capsid protein VP3. As to quaternary structure, interacts with capsid protein VP1. Interacts with capsid protein VP3. Interacts with capsid protein VP1. Interacts with capsid protein VP2. In terms of processing, specific enzymatic cleavages by viral protease in vivo yield a variety of precursors and mature proteins. Polyprotein processing intermediates are produced, such as P1-2A which is a functional precursor of the structural proteins, VP0 which is a VP4-VP2 precursor, VP1-2A precursor, 3ABC precursor which is a stable and catalytically active precursor of 3A, 3B and 3C proteins, 3AB and 3CD precursors. The assembly signal 2A is removed from VP1-2A by a host protease, possibly host Cathepsin L. This cleavage occurs over a region of 3 amino-acids probably generating VP1 proteins with heterogeneous C-termini. During virion maturation, immature virions are rendered infectious following cleavage of VP0 into VP4 and VP2. This maturation seems to be an autocatalytic event triggered by the presence of RNA in the capsid and is followed by a conformational change of the particle. Post-translationally, the assembly signal 2A is removed from VP1-2A by a host protease, possibly host Cathepsin L in naked virions. This cleavage does not occur in enveloped virions. This cleavage occurs over a region of 3 amino-acids probably generating VP1 proteins with heterogeneous C-termini. In terms of processing, VPg is uridylylated prior to priming replication into VPg-pUpU. Unlike other picornaviruses, does not seem to be myristoylated.

Its subcellular location is the virion. It localises to the host endosome. The protein localises to the host multivesicular body. The protein resides in the host membrane. It is found in the host mitochondrion outer membrane. Its subcellular location is the host cytoplasm. It localises to the host cytoplasmic vesicle membrane. It catalyses the reaction RNA(n) + a ribonucleoside 5'-triphosphate = RNA(n+1) + diphosphate. The enzyme catalyses a ribonucleoside 5'-triphosphate + H2O = a ribonucleoside 5'-diphosphate + phosphate + H(+). It carries out the reaction Selective cleavage of Gln-|-Gly bond in the poliovirus polyprotein. In other picornavirus reactions Glu may be substituted for Gln, and Ser or Thr for Gly.. In terms of biological role, capsid proteins VP1, VP2, and VP3 form a closed capsid enclosing the viral positive strand RNA genome. All these proteins contain a beta-sheet structure called beta-barrel jelly roll. Together they form an icosahedral capsid (T=3) composed of 60 copies of each VP1, VP2, and VP3, with a diameter of approximately 300 Angstroms. VP1 is situated at the 12 fivefold axes, whereas VP2 and VP3 are located at the quasi-sixfold axes. The naked capsid interacts with the host receptor HAVCR1 to provide virion attachment to and probably entry into the target cell. Its function is as follows. VP0 precursor is a component of the immature procapsids. Functionally, plays a role in the assembly of the 12 pentamers into an icosahedral structure. Has not been detected in mature virions, supposedly owing to its small size. Precursor component of immature procapsids that corresponds to an extended form of the structural protein VP1. After maturation, possibly by the host Cathepsin L, the assembly signal 2A is cleaved to give rise to the mature VP1 protein. In terms of biological role, functions as a viroporin. Affects membrane integrity and causes an increase in membrane permeability. Involved in host intracellular membrane rearrangements probably to give rise to the viral factories. Does not disrupt calcium homeostasis or glycoprotein trafficking. Antagonizes the innate immune response of the host by suppressing IFN-beta synthesis, which it achieves by interfering with the RIG-I/IFIH1 pathway. Its function is as follows. Affects membrane integrity and causes an increase in membrane permeability. Functionally, associates with and induces structural rearrangements of intracellular membranes. Displays RNA-binding activity. The precursor 3ABC is targeted to the mitochondrial membrane where protease 3C activity cleaves and inhibits the host antiviral protein MAVS, thereby disrupting activation of IRF3 through the IFIH1/MDA5 pathway. In vivo, the protease activity of 3ABC precursor is more efficient in cleaving the 2BC precursor than that of protein 3C. The 3ABC precursor may therefore play a role in the proteolytic processing of the polyprotein. Possible viroporin. In terms of biological role, interacts with the 3CD precursor and with RNA structures found at both the 5'- and 3'-termini of the viral genome. Since the 3AB precursor contains the hydrophobic domain 3A, it probably anchors the whole viral replicase complex to intracellular membranes on which viral RNA synthesis occurs. Its function is as follows. May serve as membrane anchor to the 3AB and 3ABC precursors via its hydrophobic domain. May interact with RNA. Functionally, acts as a primer for viral RNA replication and remains covalently bound to viral genomic RNA. VPg is uridylylated prior to priming replication into VPg-pUpU. The VPg-pUpU is then used as primer on the genomic RNA poly(A) by the RNA-dependent RNA polymerase to replicate the viral genome. Cysteine protease that generates mature viral proteins from the precursor polyprotein. In addition to its proteolytic activity, it binds to viral RNA, and thus influences viral genome replication. RNA and substrate bind cooperatively to the protease. Cleaves IKBKG/NEMO to impair innate immune signaling. Cleaves host PABPC1 which may participate in the switch of viral translation to RNA synthesis. In terms of biological role, interacts with the 3AB precursor and with RNA structures found at both the 5'- and 3'-termini of the viral genome. Disrupts TLR3 signaling by degrading the host adapter protein TICAM1/TRIF. Its function is as follows. Replicates genomic and antigenomic RNA by recognizing replications specific signals. This chain is Genome polyprotein, found in Cercopithecus hamlyni (Owl-faced monkey).